Consider the following 351-residue polypeptide: Protein Wnt-8a (351 aa).

An N-terminal signal peptide occupies residues 1-24 (MGNLFMLWAALGICCAAFSASAWS). Cysteine 54 and cysteine 65 are joined by a disulfide. The N-linked (GlcNAc...) asparagine glycan is linked to asparagine 103. Disulfide bonds link cysteine 104–cysteine 112, cysteine 114–cysteine 132, cysteine 180–cysteine 194, cysteine 182–cysteine 189, cysteine 259–cysteine 297, cysteine 275–cysteine 290, cysteine 294–cysteine 336, cysteine 312–cysteine 327, cysteine 314–cysteine 324, and cysteine 319–cysteine 320. Serine 186 carries O-palmitoleoyl serine lipidation. 2 N-linked (GlcNAc...) asparagine glycosylation sites follow: asparagine 262 and asparagine 281.

Belongs to the Wnt family. Forms a soluble 1:1 complex with AFM; this prevents oligomerization and is required for prolonged biological activity. The complex with AFM may represent the physiological form in body fluids. In terms of processing, palmitoleoylation is required for efficient binding to frizzled receptors. Depalmitoleoylation leads to Wnt signaling pathway inhibition. Post-translationally, proteolytic processing by TIKI1 and TIKI2 promotes oxidation and formation of large disulfide-bond oligomers, leading to inactivation of WNT8A.

Its subcellular location is the secreted. The protein localises to the extracellular space. The protein resides in the extracellular matrix. Ligand for members of the frizzled family of seven transmembrane receptors. Plays a role in embryonic patterning. This Homo sapiens (Human) protein is Protein Wnt-8a (WNT8A).